The sequence spans 60 residues: Large ribosomal subunit protein uL30 (60 aa).

It belongs to the universal ribosomal protein uL30 family. In terms of assembly, part of the 50S ribosomal subunit.

In Cupriavidus necator (strain ATCC 17699 / DSM 428 / KCTC 22496 / NCIMB 10442 / H16 / Stanier 337) (Ralstonia eutropha), this protein is Large ribosomal subunit protein uL30.